A 400-amino-acid polypeptide reads, in one-letter code: Centrosomal protein CEP57L1 (400 aa).

S45 is modified (phosphoserine). Coiled-coil stretches lie at residues 47-111 and 138-213; these read NNQA…KKDI and NVER…QDRA. Disordered regions lie at residues 222–261 and 314–400; these read REPP…EPVS and MESK…KWEQ. A compositionally biased stretch (polar residues) spans 244–258; that stretch reads RTTSQARANPQSSGE. Residues 261–345 are a coiled coil; sequence SICDSLSELL…EKIENSRINE (85 aa). Composition is skewed to basic and acidic residues over residues 314-342 and 391-400; these read MESK…ENSR and LRRDDIKWEQ.

This sequence belongs to the translokin family.

Its subcellular location is the cytoplasm. It localises to the cytoskeleton. It is found in the microtubule organizing center. The protein localises to the centrosome. Its function is as follows. Centrosomal protein which may be required for microtubule attachment to centrosomes. This Mus musculus (Mouse) protein is Centrosomal protein CEP57L1 (Cep57l1).